Reading from the N-terminus, the 306-residue chain is Tyrosine recombinase XerC (306 aa).

One can recognise a Core-binding (CB) domain in the interval 10–94; the sequence is ARCHSYLQQF…AVKQWGEFLL (85 aa). Residues 115-294 enclose the Tyr recombinase domain; it reads PLPKNIDVDS…DFQHLAKVYD (180 aa). Residues Arg-154, Lys-178, His-246, Arg-249, and His-272 contribute to the active site. Tyr-281 acts as the O-(3'-phospho-DNA)-tyrosine intermediate in catalysis.

Belongs to the 'phage' integrase family. XerC subfamily. Forms a cyclic heterotetrameric complex composed of two molecules of XerC and two molecules of XerD.

Its subcellular location is the cytoplasm. Its function is as follows. Site-specific tyrosine recombinase, which acts by catalyzing the cutting and rejoining of the recombining DNA molecules. The XerC-XerD complex is essential to convert dimers of the bacterial chromosome into monomers to permit their segregation at cell division. It also contributes to the segregational stability of plasmids. The polypeptide is Tyrosine recombinase XerC (Shewanella oneidensis (strain ATCC 700550 / JCM 31522 / CIP 106686 / LMG 19005 / NCIMB 14063 / MR-1)).